Consider the following 607-residue polypeptide: MHLNLKSLCSLTLISQAKTSNPFLSFSNCRPFSSLHSGSANLILMELLKEVAKEGSSASVGVAIRADQKSYSYKQLISSAQRICSLLCSTDLKASHKAGKQVTPALINGLSGHGHLGGARVGIVAKPSAEFVTGVLGTWLSGGVAVPLALSYPEAELLHVMTDSDISMILSTEDHQELMQKIAAKTAAQFSLIPPVPSSCSQEGAVDHLQTGDINTDSILHNTEISNENPALIVYTSGTTGKPKGVVHTHKSINAQVQTLAKAWEYTPADQFLHCLPLHHVHGLFNALFAPLYARSTVEFMPKFSVRGIWQRWRESYPTCETKVDDCITVFTGVPTMYTRLIQGYEAMDPELKEASASAAKQLRLMMCGSSALPIPVMQQWQTITGHRLLERYGMTEFVMAISNPLKGERKAGTVGKPFPGVEVRIVAEDENGSDTTGVGELCVRSPSLFKEYWRLPEVTKSSFTDDGFFKTGDAGKVDEDGYYVILGRTSADIMKVGGYKLSALEIESVLLEHPTVEECCVLGLPDKDYGEAVSAIIVPAAEAKKKGEEESKPAISLEELFSWAQHKLAPYKLPTRLFLWDSLPRNAMGKVNKKELKKKLTVEQGV.

ATP-binding positions include 236-244 (TSGTTGKPK), 391-396 (ERYGMT), aspartate 474, 486-489 (ILGR), and lysine 591. The segment at 305–391 (SVRGIWQRWR…QTITGHRLLE (87 aa)) is SBD1. The tract at residues 392–453 (RYGMTEFVMA…VRSPSLFKEY (62 aa)) is SBD2.

This sequence belongs to the ATP-dependent AMP-binding enzyme family. In terms of tissue distribution, mostly expressed at low levels in glandular trichomes (lupulin glands) after flowering, and, to a lower extent, in stems, leaves, flowers and cones.

It is found in the cytoplasm. Its subcellular location is the cytosol. The chain is Probable CoA ligase CCL8 from Humulus lupulus (European hop).